Consider the following 581-residue polypeptide: ATP-dependent lipid A-core flippase (581 aa).

The next 6 membrane-spanning stretches (helical) occupy residues 21–41, 65–85, 138–158, 161–181, 246–266, and 271–291; these read TVAI…ALFI, FVVI…SYCL, ALLI…VMFY, WQLS…VTVV, LSVS…LWVV, and MIDT…MMLL. The ABC transmembrane type-1 domain occupies 24-306; the sequence is IVAIIGMIGY…LANVNSDMQR (283 aa). One can recognise an ABC transporter domain in the interval 338–575; the sequence is IEVKNVTFKY…NGTYSALCKM (238 aa). 372-379 contributes to the ATP binding site; sequence GRSGSGKS.

It belongs to the ABC transporter superfamily. Lipid exporter (TC 3.A.1.106) family. In terms of assembly, homodimer.

The protein localises to the cell inner membrane. It catalyses the reaction ATP + H2O + lipid A-core oligosaccharideSide 1 = ADP + phosphate + lipid A-core oligosaccharideSide 2.. Involved in lipopolysaccharide (LPS) biosynthesis. Translocates lipid A-core from the inner to the outer leaflet of the inner membrane. Transmembrane domains (TMD) form a pore in the inner membrane and the ATP-binding domain (NBD) is responsible for energy generation. The protein is ATP-dependent lipid A-core flippase of Pseudoalteromonas translucida (strain TAC 125).